The chain runs to 303 residues: Acetaldehyde dehydrogenase 2 (303 aa).

The active-site Acyl-thioester intermediate is cysteine 130. Residues 161 to 169 and asparagine 272 contribute to the NAD(+) site; that span reads SVGPGTRKN.

It belongs to the acetaldehyde dehydrogenase family.

The enzyme catalyses acetaldehyde + NAD(+) + CoA = acetyl-CoA + NADH + H(+). The chain is Acetaldehyde dehydrogenase 2 from Burkholderia vietnamiensis (strain G4 / LMG 22486) (Burkholderia cepacia (strain R1808)).